The primary structure comprises 129 residues: Histone H2A.2 (129 aa).

Lysine 5 carries the post-translational modification N6-acetyllysine. An N5-methylglutamine modification is found at glutamine 108.

It belongs to the histone H2A family. The nucleosome is a histone octamer containing two molecules each of H2A, H2B, H3 and H4 assembled in one H3-H4 heterotetramer and two H2A-H2B heterodimers. The octamer wraps approximately 147 bp of DNA. Acetylated by ESA1 to form H2AK4ac.

The protein localises to the nucleus. Its subcellular location is the chromosome. Core component of nucleosome which plays a central role in DNA double strand break (DSB) repair. Nucleosomes wrap and compact DNA into chromatin, limiting DNA accessibility to the cellular machineries which require DNA as a template. Histones thereby play a central role in transcription regulation, DNA repair, DNA replication and chromosomal stability. DNA accessibility is regulated via a complex set of post-translational modifications of histones, also called histone code, and nucleosome remodeling. This Lodderomyces elongisporus (strain ATCC 11503 / CBS 2605 / JCM 1781 / NBRC 1676 / NRRL YB-4239) (Yeast) protein is Histone H2A.2 (HTA2).